The sequence spans 329 residues: 4-hydroxythreonine-4-phosphate dehydrogenase (329 aa).

His-136 and Thr-137 together coordinate substrate. A divalent metal cation-binding residues include His-166, His-211, and His-266. The substrate site is built by Lys-274, Asn-283, and Arg-292.

It belongs to the PdxA family. In terms of assembly, homodimer. It depends on Zn(2+) as a cofactor. The cofactor is Mg(2+). Requires Co(2+) as cofactor.

It localises to the cytoplasm. It catalyses the reaction 4-(phosphooxy)-L-threonine + NAD(+) = 3-amino-2-oxopropyl phosphate + CO2 + NADH. It participates in cofactor biosynthesis; pyridoxine 5'-phosphate biosynthesis; pyridoxine 5'-phosphate from D-erythrose 4-phosphate: step 4/5. Functionally, catalyzes the NAD(P)-dependent oxidation of 4-(phosphooxy)-L-threonine (HTP) into 2-amino-3-oxo-4-(phosphooxy)butyric acid which spontaneously decarboxylates to form 3-amino-2-oxopropyl phosphate (AHAP). In Salmonella typhimurium (strain LT2 / SGSC1412 / ATCC 700720), this protein is 4-hydroxythreonine-4-phosphate dehydrogenase.